The sequence spans 277 residues: MDTILALKVIIMGIVEGLTEFLPISSTGHLILAGSLLEFTGPKVKVFEIAIQTGAMLAVVWEYRVKIAAVLGGLFTERRAQKFAVNIVVAFLPAALLGLVFAGAIKEKLFAPVPVAIAFIVGGFVILWVERRNKQQVHAERVQSVDEMTLLDAFKVGCAQAFALIPGTSRSGASIIGGMMFGLSRKAATEFSFFLAIPTLMGATVYSVYKDRALLSMADIPLFGLGGLAAFFSAFLCVRWLLRYISTHDFTFFAYYRIGFGLFVLLSAHYGWVVWAE.

A run of 5 helical transmembrane segments spans residues 85-105 (VNIV…AGAI), 109-129 (LFAP…ILWV), 188-208 (ATEF…VYSV), 218-238 (ADIP…FLCV), and 256-276 (YRIG…VVWA).

It belongs to the UppP family.

Its subcellular location is the cell inner membrane. The enzyme catalyses di-trans,octa-cis-undecaprenyl diphosphate + H2O = di-trans,octa-cis-undecaprenyl phosphate + phosphate + H(+). Its function is as follows. Catalyzes the dephosphorylation of undecaprenyl diphosphate (UPP). Confers resistance to bacitracin. The sequence is that of Undecaprenyl-diphosphatase from Herminiimonas arsenicoxydans.